The primary structure comprises 3916 residues: Fusarin C synthetase (3916 aa).

One can recognise a Ketosynthase family 3 (KS3) domain in the interval 9–440 (KEPIAIIGTS…GTNVHAIIEQ (432 aa)). Residues Cys182, His319, and His360 each act as for beta-ketoacyl synthase activity in the active site. Positions 548-869 (VFTGQGAQWP…VTRNIHDVEA (322 aa)) are malonyl-CoA:ACP transacylase (MAT) domain. The N-terminal hotdog fold stretch occupies residues 935 to 1068 (HPLLGARSVE…GQLRVEFSSL (134 aa)). Positions 935-1228 (HPLLGARSVE…GLTCTSLLRP (294 aa)) are dehydratase (DH) domain. The region spanning 935-1231 (HPLLGARSVE…CTSLLRPGPS (297 aa)) is the PKS/mFAS DH domain. His967 acts as the Proton acceptor; for dehydratase activity in catalysis. The tract at residues 1084–1231 (LTSVDMERFY…CTSLLRPGPS (148 aa)) is C-terminal hotdog fold. The Proton donor; for dehydratase activity role is filled by Asp1141. The C-methyltransferase (CMeT) domain stretch occupies residues 1350-1584 (VGENLPAVVR…YMTSVMLSQA (235 aa)). Residues 2092–2266 (TYLLIGFTGG…AASVMHIGMV (175 aa)) form a ketoreductase (KR) domain 1 region. Residues 2372–2449 (EILAVVEEEF…ELCSTVVSHL (78 aa)) form the Carrier 1 domain. Ser2409 carries the post-translational modification O-(pantetheine 4'-phosphoryl)serine. The disordered stretch occupies residues 2482–2511 (ASPTENEPFTIRNSPNSTQVTSESGVDEET). Residues 2486–2505 (ENEPFTIRNSPNSTQVTSES) show a composition bias toward polar residues. Residues 2522–2806 (PLSFAQERLW…VNLLPLRLKL (285 aa)) form a condensation region. An adenylation region spans residues 2973-3385 (FEKCVVNQPD…RIAGDSQIKL (413 aa)). The Carrier 2 domain occupies 3493–3570 (KPLTETQERL…EMAAKIDGFT (78 aa)). Position 3530 is an O-(pantetheine 4'-phosphoryl)serine (Ser3530). Residues 3612–3833 (LTGATGFLGV…DFVPVDVVAA (222 aa)) are thiolester reductase (R) domain.

It in the C-terminal section; belongs to the NRP synthetase family.

Its pathway is mycotoxin biosynthesis. Functionally, fusarin C synthetase; part of the gene cluster that mediates the biosynthesis of the mycotoxin fusarin C. Within the cluster, FUS1, FUS2, FUS8 and FUS9 are sufficient for fusarin production. The roles of the other FUS members are yet undetermined. The fusarin C synthetase FUS1 is responsible for the condensation of one acetyl-coenzyme A (CoA) unit with six malonyl-CoA units and the amide linkage of the arising heptaketide and homoserine, subsequently releasing the first intermediate, prefusarin, as an alcohol with an open ring structure. The cytochrome P450 monooxygenase FUS8 participates in multiple oxidation processes at carbon C-20 and is able to use the FUS1 product as substrate, resulting in formation of 20-hydroxy-prefusarin. This reaction seems to be essential before the 2-pyrrolidone ring closure can be catalyzed by FUS2, generating 20-hydroxy-fusarin. FUS8 is able to further oxidizes carbon C-20 after ring closure, resulting in the formation of carboxy-fusarin C. As the last step, FUS9 methylates the hydroxyl group at C-21 to generate fusarin C. Fusarin C can then rearrange to epi-fusarin C, the (z)-isomers, and fusarin A and fusarin D. The chain is Fusarin C synthetase from Gibberella moniliformis (strain M3125 / FGSC 7600) (Maize ear and stalk rot fungus).